The following is a 196-amino-acid chain: FMN-dependent NADH:quinone oxidoreductase (196 aa).

Serine 10 is an FMN binding site.

Belongs to the azoreductase type 1 family. In terms of assembly, homodimer. It depends on FMN as a cofactor.

It carries out the reaction 2 a quinone + NADH + H(+) = 2 a 1,4-benzosemiquinone + NAD(+). It catalyses the reaction N,N-dimethyl-1,4-phenylenediamine + anthranilate + 2 NAD(+) = 2-(4-dimethylaminophenyl)diazenylbenzoate + 2 NADH + 2 H(+). Quinone reductase that provides resistance to thiol-specific stress caused by electrophilic quinones. Functionally, also exhibits azoreductase activity. Catalyzes the reductive cleavage of the azo bond in aromatic azo compounds to the corresponding amines. This chain is FMN-dependent NADH:quinone oxidoreductase, found in Cereibacter sphaeroides (strain ATCC 17023 / DSM 158 / JCM 6121 / CCUG 31486 / LMG 2827 / NBRC 12203 / NCIMB 8253 / ATH 2.4.1.) (Rhodobacter sphaeroides).